The following is a 191-amino-acid chain: DNA-directed RNA polymerase subunit Rpo3 (191 aa).

The protein belongs to the archaeal Rpo3/eukaryotic RPB3 RNA polymerase subunit family. As to quaternary structure, part of the RNA polymerase complex. Interacts with Rpo12. Forms an Rpo3-Rpo10-Rpo11-Rpo12 complex upon coexpression.

The protein localises to the cytoplasm. It carries out the reaction RNA(n) + a ribonucleoside 5'-triphosphate = RNA(n+1) + diphosphate. DNA-dependent RNA polymerase (RNAP) catalyzes the transcription of DNA into RNA using the four ribonucleoside triphosphates as substrates. In Methanocaldococcus jannaschii (strain ATCC 43067 / DSM 2661 / JAL-1 / JCM 10045 / NBRC 100440) (Methanococcus jannaschii), this protein is DNA-directed RNA polymerase subunit Rpo3.